A 405-amino-acid polypeptide reads, in one-letter code: Arginine deiminase (405 aa).

Residue Cys395 is the Amidino-cysteine intermediate of the active site.

This sequence belongs to the arginine deiminase family.

It localises to the cytoplasm. The enzyme catalyses L-arginine + H2O = L-citrulline + NH4(+). It participates in amino-acid degradation; L-arginine degradation via ADI pathway; carbamoyl phosphate from L-arginine: step 1/2. The sequence is that of Arginine deiminase from Rhodococcus erythropolis (strain PR4 / NBRC 100887).